Consider the following 387-residue polypeptide: F-box protein At5g41490 (387 aa).

An F-box domain is found at 2-47; sequence ATMITNLRRDLIEEIISRVPLRSMKAVRLTCKSWNNISKSEIFTKM.

The protein is F-box protein At5g41490 of Arabidopsis thaliana (Mouse-ear cress).